Here is a 324-residue protein sequence, read N- to C-terminus: NADH-ubiquinone oxidoreductase chain 1 (324 aa).

8 helical membrane-spanning segments follow: residues 10–30, 76–96, 107–127, 143–163, 178–198, 229–249, 260–280, and 300–320; these read MIMTLSYMIPILIAVAFLTLV, FLFILTPILALLLALTIWTPL, LGLLFLLAMSSLTVYSLLWSG, VAQTISYEVTLAIILLSTIML, PMYLIFSSWPLTMMWYISTLA, LFFLAEYANIMLMNTLTITLF, ELFSITLATKVLLLSSSFLWI, and FLPLTLAMCLWHTSMPISYAG.

This sequence belongs to the complex I subunit 1 family.

It localises to the mitochondrion inner membrane. It carries out the reaction a ubiquinone + NADH + 5 H(+)(in) = a ubiquinol + NAD(+) + 4 H(+)(out). Functionally, core subunit of the mitochondrial membrane respiratory chain NADH dehydrogenase (Complex I) that is believed to belong to the minimal assembly required for catalysis. Complex I functions in the transfer of electrons from NADH to the respiratory chain. The immediate electron acceptor for the enzyme is believed to be ubiquinone. This is NADH-ubiquinone oxidoreductase chain 1 (MT-ND1) from Coturnix japonica (Japanese quail).